The following is a 593-amino-acid chain: Aspartate--tRNA ligase (593 aa).

L-aspartate is bound at residue Glu-173. The aspartate stretch occupies residues 197-200; it reads QLFK. Arg-219 is a binding site for L-aspartate. ATP is bound by residues 219–221 and Gln-228; that span reads RDE. His-449 contacts L-aspartate. Glu-483 lines the ATP pocket. Position 490 (Arg-490) interacts with L-aspartate. 535–538 contacts ATP; that stretch reads GLDR.

Belongs to the class-II aminoacyl-tRNA synthetase family. Type 1 subfamily. As to quaternary structure, homodimer.

Its subcellular location is the cytoplasm. The enzyme catalyses tRNA(Asp) + L-aspartate + ATP = L-aspartyl-tRNA(Asp) + AMP + diphosphate. Functionally, catalyzes the attachment of L-aspartate to tRNA(Asp) in a two-step reaction: L-aspartate is first activated by ATP to form Asp-AMP and then transferred to the acceptor end of tRNA(Asp). The sequence is that of Aspartate--tRNA ligase from Shewanella piezotolerans (strain WP3 / JCM 13877).